A 109-amino-acid polypeptide reads, in one-letter code: Iron-sulfur assembly protein IscA-like 3, mitochondrial (109 aa).

The transit peptide at 1 to 18 (MRKQVLALSDTAAARIRQ) directs the protein to the mitochondrion. The Fe cation site is built by Cys-37, Cys-100, and Cys-102.

It belongs to the HesB/IscA family. Homodimer; may form tetramers and higher multimers. Fe cation is required as a cofactor.

It localises to the mitochondrion. Its function is as follows. Involved in the assembly of mitochondrial iron-sulfur proteins. Probably involved in the binding of an intermediate of Fe/S cluster assembly. The protein is Iron-sulfur assembly protein IscA-like 3, mitochondrial of Arabidopsis thaliana (Mouse-ear cress).